The sequence spans 194 residues: MSKLDKNEFICLKFDAWLYEKDDNLPYSLLEFIWDELEAKLNKDETITKEIKDKIKKLGKKSVNLWKNMVLGAINATNIKAGTSPITELSGIKINASFDGSKFVGYVVNASKEDENEEESYHKKVKELQNCFKELSKTLADNGKKLIIFIDELDRCEAENILNLLASIKLFFSLGGEDEDENKNDDEIKILFIL.

This is an uncharacterized protein from Methanocaldococcus jannaschii (strain ATCC 43067 / DSM 2661 / JAL-1 / JCM 10045 / NBRC 100440) (Methanococcus jannaschii).